The sequence spans 198 residues: V-type ATP synthase subunit E (198 aa).

The protein belongs to the V-ATPase E subunit family.

In terms of biological role, produces ATP from ADP in the presence of a proton gradient across the membrane. The protein is V-type ATP synthase subunit E of Clostridium perfringens (strain ATCC 13124 / DSM 756 / JCM 1290 / NCIMB 6125 / NCTC 8237 / Type A).